The following is an 88-amino-acid chain: UPF0250 protein bbp_432 (88 aa).

Belongs to the UPF0250 family.

In Buchnera aphidicola subsp. Baizongia pistaciae (strain Bp), this protein is UPF0250 protein bbp_432.